The following is a 189-amino-acid chain: Hypoxanthine/guanine phosphoribosyltransferase (189 aa).

The protein belongs to the purine/pyrimidine phosphoribosyltransferase family. Archaeal HPRT subfamily. In terms of assembly, homodimer.

The protein localises to the cytoplasm. The enzyme catalyses IMP + diphosphate = hypoxanthine + 5-phospho-alpha-D-ribose 1-diphosphate. It carries out the reaction GMP + diphosphate = guanine + 5-phospho-alpha-D-ribose 1-diphosphate. It participates in purine metabolism; IMP biosynthesis via salvage pathway; IMP from hypoxanthine: step 1/1. Its function is as follows. Catalyzes a salvage reaction resulting in the formation of IMP that is energically less costly than de novo synthesis. This is Hypoxanthine/guanine phosphoribosyltransferase from Methanothrix soehngenii (strain ATCC 5969 / DSM 3671 / JCM 10134 / NBRC 103675 / OCM 69 / GP-6) (Methanosaeta concilii).